The following is a 1032-amino-acid chain: Connector enhancer of kinase suppressor of ras 2 (1032 aa).

In terms of domain architecture, SAM spans 11–76 (WSPSQVVDWM…LEAVDLLCAL (66 aa)). The residue at position 12 (serine 12) is a Phosphoserine. Residues 84 to 178 (NLKTLSHKLN…TIVQQDCTVY (95 aa)) form the CRIC domain. The PDZ domain occupies 215–297 (VIQLANIKPS…GVILTLKKRP (83 aa)). Residues 302-515 (TSAPALLKNM…PAHYSLLPSL (214 aa)) form the DUF1170 domain. The span at 324 to 340 (RSPTSSVATPSSTISTP) shows a compositional bias: low complexity. The interval 324 to 349 (RSPTSSVATPSSTISTPTKRDSSALQ) is disordered. 2 positions are modified to phosphoserine: serine 338 and serine 390. Disordered stretches follow at residues 480 to 509 (EEYM…PAHY) and 538 to 558 (FQQS…ISGK). A compositionally biased stretch (basic residues) spans 545–558 (HKSKKKNKGAISGK). Positions 570–669 (RGDCEGWLWK…WLNRINMLTA (100 aa)) constitute a PH domain. The segment at 682 to 766 (DYWSESDKEE…PIRKTASQRR (85 aa)) is disordered. Tyrosine 683 carries the phosphotyrosine modification. Over residues 683–693 (YWSESDKEEAD) the composition is skewed to acidic residues. Phosphoserine occurs at positions 685 and 687. Over residues 701–714 (DSPPPPYDTYPRPP) the composition is skewed to pro residues. The span at 730–740 (LSSTETSQSQS) shows a compositional bias: low complexity. Phosphoserine occurs at positions 756 and 767. The interval 864–900 (ACDPQDDIQPPEVEEEEEEEEEEAAGENVGEKNENRE) is disordered. A coiled-coil region spans residues 874 to 917 (PEVEEEEEEEEEEAAGENVGEKNENREEKLGDSLQDLYRALEEA). Positions 875-888 (EVEEEEEEEEEEAA) are enriched in acidic residues. Serine 906 carries the phosphoserine modification.

Belongs to the CNKSR family. In terms of assembly, interacts with RAF1, RAB2L and RAL GTPase proteins. Post-translationally, phosphorylated on tyrosine.

The protein resides in the cytoplasm. It localises to the membrane. May function as an adapter protein or regulator of Ras signaling pathways. The sequence is that of Connector enhancer of kinase suppressor of ras 2 (Cnksr2) from Mus musculus (Mouse).